A 149-amino-acid polypeptide reads, in one-letter code: uncharacterized protein (149 aa).

This sequence to B.subtilis XkdN.

This is an uncharacterized protein from Bacillus subtilis (strain 168).